A 647-amino-acid chain; its full sequence is Acetyl-coenzyme A synthetase (647 aa).

CoA-binding positions include 190-193 (RGGK), Thr-310, and Asn-334. ATP contacts are provided by residues 386-388 (GEP), 410-415 (DTWWQT), Asp-499, and Arg-514. Ser-522 serves as a coordination point for CoA. Residue Arg-525 coordinates ATP. Residues Val-536, His-538, and Val-541 each contribute to the Mg(2+) site. CoA is bound at residue Arg-583. Lys-608 is subject to N6-acetyllysine.

The protein belongs to the ATP-dependent AMP-binding enzyme family. It depends on Mg(2+) as a cofactor. Post-translationally, acetylated. Deacetylation by the SIR2-homolog deacetylase activates the enzyme.

It carries out the reaction acetate + ATP + CoA = acetyl-CoA + AMP + diphosphate. Catalyzes the conversion of acetate into acetyl-CoA (AcCoA), an essential intermediate at the junction of anabolic and catabolic pathways. AcsA undergoes a two-step reaction. In the first half reaction, AcsA combines acetate with ATP to form acetyl-adenylate (AcAMP) intermediate. In the second half reaction, it can then transfer the acetyl group from AcAMP to the sulfhydryl group of CoA, forming the product AcCoA. In Xanthomonas oryzae pv. oryzae (strain MAFF 311018), this protein is Acetyl-coenzyme A synthetase.